The sequence spans 299 residues: Coenzyme PQQ synthesis protein B (299 aa).

The protein belongs to the PqqB family.

It functions in the pathway cofactor biosynthesis; pyrroloquinoline quinone biosynthesis. Functionally, may be involved in the transport of PQQ or its precursor to the periplasm. This Methylorubrum extorquens (strain PA1) (Methylobacterium extorquens) protein is Coenzyme PQQ synthesis protein B.